Here is a 142-residue protein sequence, read N- to C-terminus: Protein NIM1-INTERACTING 1 (142 aa).

Residues 47 to 53 (DTFFKLI) are involved in NPR1/NIM1 interaction. The Nuclear localization signal signature appears at 60–64 (RKRRR). 2 disordered regions span residues 63 to 86 (RREELAENSGVVRRKSNGGERSGI) and 108 to 142 (MFVSDHKEENTKVEQEEDQTEERNEDKALDLNLAL). A coiled-coil region spans residues 110 to 141 (VSDHKEENTKVEQEEDQTEERNEDKALDLNLA). Residues 111–121 (SDHKEENTKVE) are compositionally biased toward basic and acidic residues.

Belongs to the NPR1-interactor family. Interacts with NPR1 C-terminal region.

The protein resides in the nucleus. In Arabidopsis thaliana (Mouse-ear cress), this protein is Protein NIM1-INTERACTING 1.